Reading from the N-terminus, the 131-residue chain is Insertion element IS1 protein InsB (131 aa).

Belongs to the transposase 27 family.

In terms of biological role, absolutely required for transposition of IS1. This Shigella flexneri protein is Insertion element IS1 protein InsB (insB1).